Consider the following 553-residue polypeptide: Arginine--tRNA ligase (553 aa).

A 'HIGH' region motif is present at residues 130-140 (ANPTGDLHIGH).

Belongs to the class-I aminoacyl-tRNA synthetase family. Monomer.

It is found in the cytoplasm. The enzyme catalyses tRNA(Arg) + L-arginine + ATP = L-arginyl-tRNA(Arg) + AMP + diphosphate. The polypeptide is Arginine--tRNA ligase (Staphylococcus aureus (strain USA300 / TCH1516)).